Here is a 349-residue protein sequence, read N- to C-terminus: tRNA pseudouridine synthase D (349 aa).

Asp77 (nucleophile) is an active-site residue. Residues 151-309 (GVPNYFGEQR…ETIDESTLKL (159 aa)) enclose the TRUD domain.

Belongs to the pseudouridine synthase TruD family.

The enzyme catalyses uridine(13) in tRNA = pseudouridine(13) in tRNA. Functionally, responsible for synthesis of pseudouridine from uracil-13 in transfer RNAs. The protein is tRNA pseudouridine synthase D of Pseudoalteromonas translucida (strain TAC 125).